We begin with the raw amino-acid sequence, 150 residues long: Phosphoribosyl-AMP cyclohydrolase (150 aa).

Aspartate 92 lines the Mg(2+) pocket. Cysteine 93 is a Zn(2+) binding site. Residues aspartate 94 and aspartate 96 each coordinate Mg(2+). The Zn(2+) site is built by cysteine 111 and cysteine 118.

Belongs to the PRA-CH family. As to quaternary structure, homodimer. Mg(2+) is required as a cofactor. Zn(2+) serves as cofactor.

The protein localises to the cytoplasm. It catalyses the reaction 1-(5-phospho-beta-D-ribosyl)-5'-AMP + H2O = 1-(5-phospho-beta-D-ribosyl)-5-[(5-phospho-beta-D-ribosylamino)methylideneamino]imidazole-4-carboxamide. Its pathway is amino-acid biosynthesis; L-histidine biosynthesis; L-histidine from 5-phospho-alpha-D-ribose 1-diphosphate: step 3/9. Functionally, catalyzes the hydrolysis of the adenine ring of phosphoribosyl-AMP. The polypeptide is Phosphoribosyl-AMP cyclohydrolase (Agrobacterium fabrum (strain C58 / ATCC 33970) (Agrobacterium tumefaciens (strain C58))).